The chain runs to 173 residues: Nucleoside-triphosphatase THEP1 (173 aa).

ATP contacts are provided by residues 9-16 (GPPGVGKT) and 97-104 (LYVIDEVG).

Belongs to the THEP1 NTPase family.

It carries out the reaction a ribonucleoside 5'-triphosphate + H2O = a ribonucleoside 5'-diphosphate + phosphate + H(+). Its function is as follows. Has nucleotide phosphatase activity towards ATP, GTP, CTP, TTP and UTP. May hydrolyze nucleoside diphosphates with lower efficiency. The sequence is that of Nucleoside-triphosphatase THEP1 from Caldivirga maquilingensis (strain ATCC 700844 / DSM 13496 / JCM 10307 / IC-167).